The primary structure comprises 103 residues: Large ribosomal subunit protein bL21 (103 aa).

It belongs to the bacterial ribosomal protein bL21 family. In terms of assembly, part of the 50S ribosomal subunit. Contacts protein L20.

Its function is as follows. This protein binds to 23S rRNA in the presence of protein L20. The chain is Large ribosomal subunit protein bL21 from Chromobacterium violaceum (strain ATCC 12472 / DSM 30191 / JCM 1249 / CCUG 213 / NBRC 12614 / NCIMB 9131 / NCTC 9757 / MK).